We begin with the raw amino-acid sequence, 367 residues long: tRNA-specific 2-thiouridylase MnmA (367 aa).

ATP is bound by residues 14–21 (AMSGGVDS) and Leu-40. The Nucleophile role is filled by Cys-108. A disulfide bond links Cys-108 and Cys-204. An ATP-binding site is contributed by Gly-132. Residues 154–156 (KDQ) are interaction with tRNA. The active-site Cysteine persulfide intermediate is the Cys-204.

Belongs to the MnmA/TRMU family.

It localises to the cytoplasm. It catalyses the reaction S-sulfanyl-L-cysteinyl-[protein] + uridine(34) in tRNA + AH2 + ATP = 2-thiouridine(34) in tRNA + L-cysteinyl-[protein] + A + AMP + diphosphate + H(+). Its function is as follows. Catalyzes the 2-thiolation of uridine at the wobble position (U34) of tRNA, leading to the formation of s(2)U34. This Rickettsia bellii (strain OSU 85-389) protein is tRNA-specific 2-thiouridylase MnmA.